The following is a 163-amino-acid chain: Calmodulin (163 aa).

An N-acetylalanine modification is found at alanine 2. 4 consecutive EF-hand domains span residues 11-46 (EQIA…LGQN), 47-82 (PTEA…KMKE), 84-119 (DHED…LGEK), and 120-155 (LSEE…GATD). Residues aspartate 24, aspartate 26, aspartate 28, threonine 30, glutamate 35, aspartate 60, aspartate 62, asparagine 64, threonine 66, glutamate 71, aspartate 97, aspartate 99, asparagine 101, glutamate 108, aspartate 133, aspartate 135, aspartate 137, glutamine 139, and glutamate 144 each coordinate Ca(2+).

Belongs to the calmodulin family. As to quaternary structure, associates with the spoke-associated complex containing CFAP61, CFAP91 and CFAP251; the association is calcium sensitive. In terms of processing, trimethylation of Lys-119 observed in other calmodulins is absent here.

It localises to the cytoplasm. The protein localises to the cytoskeleton. It is found in the flagellum axoneme. Its function is as follows. Calmodulin mediates the control of a large number of enzymes, ion channels and other proteins by Ca(2+). Among the enzymes to be stimulated by the calmodulin-Ca(2+) complex are a number of protein kinases and phosphatases. This Chlamydomonas reinhardtii (Chlamydomonas smithii) protein is Calmodulin.